We begin with the raw amino-acid sequence, 115 residues long: Large ribosomal subunit protein bL21 (115 aa).

This sequence belongs to the bacterial ribosomal protein bL21 family. Part of the 50S ribosomal subunit. Contacts protein L20.

In terms of biological role, this protein binds to 23S rRNA in the presence of protein L20. The sequence is that of Large ribosomal subunit protein bL21 from Coxiella burnetii (strain RSA 331 / Henzerling II).